The sequence spans 54 residues: uncharacterized protein (54 aa).

Residues M1 to T54 are disordered.

This is an uncharacterized protein from Mycobacterium tuberculosis (strain ATCC 25618 / H37Rv).